Consider the following 409-residue polypeptide: Tryptophan synthase beta chain (409 aa).

Position 95 is an N6-(pyridoxal phosphate)lysine (K95).

This sequence belongs to the TrpB family. Tetramer of two alpha and two beta chains. Requires pyridoxal 5'-phosphate as cofactor.

It carries out the reaction (1S,2R)-1-C-(indol-3-yl)glycerol 3-phosphate + L-serine = D-glyceraldehyde 3-phosphate + L-tryptophan + H2O. It participates in amino-acid biosynthesis; L-tryptophan biosynthesis; L-tryptophan from chorismate: step 5/5. Its function is as follows. The beta subunit is responsible for the synthesis of L-tryptophan from indole and L-serine. The sequence is that of Tryptophan synthase beta chain from Pseudomonas savastanoi pv. phaseolicola (Pseudomonas syringae pv. phaseolicola).